Here is an 839-residue protein sequence, read N- to C-terminus: Probable beta-glucosidase I (839 aa).

Residue asparagine 197 is glycosylated (N-linked (GlcNAc...) asparagine). Aspartate 225 is a catalytic residue. Residues aspartate 395–valine 555 form the PA14 domain. Asparagine 620 carries an N-linked (GlcNAc...) asparagine glycan.

It belongs to the glycosyl hydrolase 3 family.

The protein localises to the secreted. It carries out the reaction Hydrolysis of terminal, non-reducing beta-D-glucosyl residues with release of beta-D-glucose.. It functions in the pathway glycan metabolism; cellulose degradation. Beta-glucosidases are one of a number of cellulolytic enzymes involved in the degradation of cellulosic biomass. Catalyzes the last step releasing glucose from the inhibitory cellobiose. In Aspergillus flavus (strain ATCC 200026 / FGSC A1120 / IAM 13836 / NRRL 3357 / JCM 12722 / SRRC 167), this protein is Probable beta-glucosidase I (bglI).